Consider the following 101-residue polypeptide: Integration host factor subunit alpha (101 aa).

It belongs to the bacterial histone-like protein family. As to quaternary structure, heterodimer of an alpha and a beta chain.

Functionally, this protein is one of the two subunits of integration host factor, a specific DNA-binding protein that functions in genetic recombination as well as in transcriptional and translational control. In Halorhodospira halophila (strain DSM 244 / SL1) (Ectothiorhodospira halophila (strain DSM 244 / SL1)), this protein is Integration host factor subunit alpha.